We begin with the raw amino-acid sequence, 360 residues long: Peptide chain release factor 1 (360 aa).

Residue Gln235 is modified to N5-methylglutamine. The interval 286-311 (QAQAQADTRRNLLGSGDRSDKIRTYN) is disordered.

This sequence belongs to the prokaryotic/mitochondrial release factor family. Methylated by PrmC. Methylation increases the termination efficiency of RF1.

It is found in the cytoplasm. In terms of biological role, peptide chain release factor 1 directs the termination of translation in response to the peptide chain termination codons UAG and UAA. This Histophilus somni (strain 2336) (Haemophilus somnus) protein is Peptide chain release factor 1.